We begin with the raw amino-acid sequence, 86 residues long: Small ribosomal subunit protein bS18 (86 aa).

The protein belongs to the bacterial ribosomal protein bS18 family. In terms of assembly, part of the 30S ribosomal subunit. Forms a tight heterodimer with protein bS6.

Functionally, binds as a heterodimer with protein bS6 to the central domain of the 16S rRNA, where it helps stabilize the platform of the 30S subunit. The polypeptide is Small ribosomal subunit protein bS18 (Campylobacter fetus subsp. fetus (strain 82-40)).